Here is a 189-residue protein sequence, read N- to C-terminus: Tumor protein p53-inducible protein 11 (189 aa).

Residues 1 to 63 (MAAKQPPPLM…FAVREPLGLR (63 aa)) lie on the Cytoplasmic side of the membrane. At serine 14 the chain carries Phosphoserine. The chain crosses the membrane as a helical span at residues 64–84 (VWQFVSAVLFSGIAIMALAFP). At 85–108 (DQLYDAVFDGAQVTSKTPIRLYGG) the chain is on the extracellular side. A helical transmembrane segment spans residues 109-129 (ALLSISLIMWNALYTAEKVII). A topological domain (cytoplasmic) is located at residue arginine 130. A helical transmembrane segment spans residues 131–151 (WTLLTEACYFSVQFLVVTATL). The Extracellular segment spans residues 152 to 159 (AETGLASQ). A helical transmembrane segment spans residues 160–180 (GILLLLASRLLFVAISVYYYY). The Cytoplasmic portion of the chain corresponds to 181–189 (QVGRKPKKV).

The protein localises to the membrane. This is Tumor protein p53-inducible protein 11 (TP53I11) from Bos taurus (Bovine).